The sequence spans 20 residues: GKPNKPRPAPIKPRPPHPRL.

Pro residues predominate over residues 1 to 13; sequence GKPNKPRPAPIKP. Residues 1–20 are disordered; that stretch reads GKPNKPRPAPIKPRPPHPRL.

The protein resides in the secreted. Antimicrobial peptide active against many Gram-negative enterobacterial and plant-associated bacterial species. Not active against other bacterial species like H.pylori, P.mirabilis, B.pertussis or N.gonorrhoeae. This is Apidaecin 2+ from Pimpla disparis (Parasitic wasp).